A 106-amino-acid polypeptide reads, in one-letter code: UPF0091 protein RC0354 (106 aa).

It belongs to the UPF0091 family.

The chain is UPF0091 protein RC0354 from Rickettsia conorii (strain ATCC VR-613 / Malish 7).